The primary structure comprises 92 residues: MSDLQKGMALLISTFHKYSGKEGDKCTLTKGELKDLLTKELGGAFGNCSDQATLDKIFKDLDTNADGVVDFQEYATMVACTTMLCNKSLSKK.

2 EF-hand domains span residues 12 to 47 (ISTF…AFGN) and 49 to 84 (SDQA…TTML). Residues threonine 27, glutamate 32, aspartate 62, asparagine 64, aspartate 66, and glutamate 73 each coordinate Ca(2+).

It belongs to the S-100 family. As to expression, abundant in epithelial cells of olfactory rosette, barbel, skin and gill but not brain or muscle.

Plays an important role in catfish calcium homeostasis. This Ictalurus punctatus (Channel catfish) protein is Ictacalcin.